The primary structure comprises 473 residues: Photosystem II CP43 reaction center protein (473 aa).

Residues 1–14 (MKTLYSRRRFYHVE) constitute a propeptide that is removed on maturation. Position 15 is an N-acetylthreonine (Thr-15). Phosphothreonine is present on Thr-15. 5 helical membrane passes run 69 to 93 (LFEV…PHLA), 134 to 155 (LLGP…KDRN), 178 to 200 (KALY…RKIT), 255 to 275 (KPFA…LSYS), and 291 to 312 (WFNN…ASQA). Glu-367 is a binding site for [CaMn4O5] cluster. Residues 447–471 (RARAAAAGFEKGIDRDFEPVLSMTP) form a helical membrane-spanning segment.

Belongs to the PsbB/PsbC family. PsbC subfamily. PSII is composed of 1 copy each of membrane proteins PsbA, PsbB, PsbC, PsbD, PsbE, PsbF, PsbH, PsbI, PsbJ, PsbK, PsbL, PsbM, PsbT, PsbX, PsbY, PsbZ, Psb30/Ycf12, at least 3 peripheral proteins of the oxygen-evolving complex and a large number of cofactors. It forms dimeric complexes. It depends on Binds multiple chlorophylls and provides some of the ligands for the Ca-4Mn-5O cluster of the oxygen-evolving complex. It may also provide a ligand for a Cl- that is required for oxygen evolution. PSII binds additional chlorophylls, carotenoids and specific lipids. as a cofactor.

It localises to the plastid. The protein localises to the chloroplast thylakoid membrane. One of the components of the core complex of photosystem II (PSII). It binds chlorophyll and helps catalyze the primary light-induced photochemical processes of PSII. PSII is a light-driven water:plastoquinone oxidoreductase, using light energy to abstract electrons from H(2)O, generating O(2) and a proton gradient subsequently used for ATP formation. The protein is Photosystem II CP43 reaction center protein of Solanum bulbocastanum (Wild potato).